Consider the following 335-residue polypeptide: Holliday junction branch migration complex subunit RuvB (335 aa).

Residues 4–184 are large ATPase domain (RuvB-L); the sequence is ADRLVSAEVL…FGIVQRLEFY (181 aa). ATP contacts are provided by residues Ile23, Arg24, Gly65, Lys68, Thr69, Thr70, 131 to 133, Arg174, Tyr184, and Arg221; that span reads EDY. Residue Thr69 participates in Mg(2+) binding. A small ATPAse domain (RuvB-S) region spans residues 185-255; it reads NVDDLQSIVS…IATRALDMLS (71 aa). The segment at 258-335 is head domain (RuvB-H); sequence AAGFDYLDRK…RHFGMVRNQE (78 aa). Residues Arg294, Arg313, and Arg318 each contribute to the DNA site.

It belongs to the RuvB family. Homohexamer. Forms an RuvA(8)-RuvB(12)-Holliday junction (HJ) complex. HJ DNA is sandwiched between 2 RuvA tetramers; dsDNA enters through RuvA and exits via RuvB. An RuvB hexamer assembles on each DNA strand where it exits the tetramer. Each RuvB hexamer is contacted by two RuvA subunits (via domain III) on 2 adjacent RuvB subunits; this complex drives branch migration. In the full resolvosome a probable DNA-RuvA(4)-RuvB(12)-RuvC(2) complex forms which resolves the HJ.

The protein localises to the cytoplasm. It catalyses the reaction ATP + H2O = ADP + phosphate + H(+). Functionally, the RuvA-RuvB-RuvC complex processes Holliday junction (HJ) DNA during genetic recombination and DNA repair, while the RuvA-RuvB complex plays an important role in the rescue of blocked DNA replication forks via replication fork reversal (RFR). RuvA specifically binds to HJ cruciform DNA, conferring on it an open structure. The RuvB hexamer acts as an ATP-dependent pump, pulling dsDNA into and through the RuvAB complex. RuvB forms 2 homohexamers on either side of HJ DNA bound by 1 or 2 RuvA tetramers; 4 subunits per hexamer contact DNA at a time. Coordinated motions by a converter formed by DNA-disengaged RuvB subunits stimulates ATP hydrolysis and nucleotide exchange. Immobilization of the converter enables RuvB to convert the ATP-contained energy into a lever motion, pulling 2 nucleotides of DNA out of the RuvA tetramer per ATP hydrolyzed, thus driving DNA branch migration. The RuvB motors rotate together with the DNA substrate, which together with the progressing nucleotide cycle form the mechanistic basis for DNA recombination by continuous HJ branch migration. Branch migration allows RuvC to scan DNA until it finds its consensus sequence, where it cleaves and resolves cruciform DNA. The protein is Holliday junction branch migration complex subunit RuvB of Photorhabdus laumondii subsp. laumondii (strain DSM 15139 / CIP 105565 / TT01) (Photorhabdus luminescens subsp. laumondii).